The primary structure comprises 332 residues: Fructose-1,6-bisphosphatase class 1 (332 aa).

Residues Glu-89, Asp-110, Leu-112, and Asp-113 each contribute to the Mg(2+) site. Substrate is bound by residues 113–116 (DGSS), Asn-206, Tyr-239, 257–259 (YLY), and Lys-269. Glu-275 contributes to the Mg(2+) binding site.

This sequence belongs to the FBPase class 1 family. In terms of assembly, homotetramer. Mg(2+) is required as a cofactor.

It is found in the cytoplasm. The enzyme catalyses beta-D-fructose 1,6-bisphosphate + H2O = beta-D-fructose 6-phosphate + phosphate. The protein operates within carbohydrate biosynthesis; gluconeogenesis. The protein is Fructose-1,6-bisphosphatase class 1 of Escherichia coli O157:H7.